The following is an 824-amino-acid chain: Intraflagellar transport protein 88 homolog (824 aa).

Disordered regions lie at residues 1–27 and 111–134; these read MENV…PAYD and AFDP…DSPE. TPR repeat units follow at residues 196–229, 232–265, 271–304, 415–448, 450–483, 484–517, 518–551, 552–585, 586–619, 620–653, and 654–687; these read YSVL…KMFS, GRLK…IPSV, IKIM…APSL, NDLE…DSRV, SAAA…DRYN, PSAL…DSSC, TEAL…LRNS, AQVL…VPTD, SQAL…FPSN, IEVI…QPTQ, and VKWQ…FPEN. The segment covering 721–731 has biased composition (basic and acidic residues); that stretch reads EMREQRIKSGR. The interval 721-824 is disordered; it reads EMREQRIKSG…EELGDDLLPE (104 aa). Residues 748–757 are compositionally biased toward polar residues; that stretch reads DSGQNNSASS. Over residues 797–808 the composition is skewed to basic and acidic residues; it reads ERPKTAAKKRID. Acidic residues predominate over residues 809 to 824; that stretch reads EDDFADEELGDDLLPE.

As to quaternary structure, component of the IFT complex B, at least composed of IFT20, IFT22, IFT25, IFT27, IFT46, IFT52, TRAF3IP1/IFT54, IFT57, IFT74, IFT80, IFT81, and IFT88. Interacts with IFT20, IFT22, IFT25, IFT27, IFT52, TRAF3IP1, IFT74, IFT80 and IFT81. Interacts with IFT172. Interacts with IFT57. Interacts with IFT46. Interacts with IFT70B. Interacts with C2CD3. Interacts with ENTR1 (via N-terminus). Interacts with LRRC56. Interacts with DZIP1. Interacts with CCDC38. Interacts with CCDC146. Interacts with CFAP53. As to expression, testis.

It is found in the cytoplasm. Its subcellular location is the cytoskeleton. The protein resides in the microtubule organizing center. It localises to the centrosome. The protein localises to the centriole. It is found in the cilium basal body. Its subcellular location is the cell projection. The protein resides in the cilium. It localises to the flagellum. Its function is as follows. Positively regulates primary cilium biogenesis. Also involved in autophagy since it is required for trafficking of ATG16L and the expansion of the autophagic compartment. This Mus musculus (Mouse) protein is Intraflagellar transport protein 88 homolog (Ift88).